The chain runs to 361 residues: Histidinol-phosphate aminotransferase (361 aa).

K224 carries the post-translational modification N6-(pyridoxal phosphate)lysine.

Belongs to the class-II pyridoxal-phosphate-dependent aminotransferase family. Histidinol-phosphate aminotransferase subfamily. As to quaternary structure, homodimer. The cofactor is pyridoxal 5'-phosphate.

The enzyme catalyses L-histidinol phosphate + 2-oxoglutarate = 3-(imidazol-4-yl)-2-oxopropyl phosphate + L-glutamate. It participates in amino-acid biosynthesis; L-histidine biosynthesis; L-histidine from 5-phospho-alpha-D-ribose 1-diphosphate: step 7/9. The protein is Histidinol-phosphate aminotransferase of Bacillus licheniformis (strain ATCC 14580 / DSM 13 / JCM 2505 / CCUG 7422 / NBRC 12200 / NCIMB 9375 / NCTC 10341 / NRRL NRS-1264 / Gibson 46).